The primary structure comprises 176 residues: Pituitary adenylate cyclase-activating polypeptide (176 aa).

The N-terminal stretch at 1–24 (MTMCSGARLALLVYGILMHSSVYG) is a signal peptide. Positions 25–80 (SPAASGLRFPGIRPENEAYDEDGNPQQDFYDSEPPGVGSPASALRDAYALYYPAEE) are excised as a propeptide. Disordered stretches follow at residues 36 to 62 (IRPE…PGVG) and 115 to 134 (GTPG…RHSD). The important for receptor binding stretch occupies residues 150–158 (VKKYLAAVL). The residue at position 158 (Leu-158) is a Leucine amide. Lysine amide is present on Lys-169. The propeptide occupies 173 to 176 (IPYL).

This sequence belongs to the glucagon family.

The protein resides in the secreted. Its function is as follows. PACAP is a neuropeptide involved in diverse array of physiological processes through activating the PACAP subfamily of class B1 G protein-coupled receptors: VIP receptor 1 (VIPR1), VIP receptor 2 (VIPR2), and PACAP type I receptor (ADCYAP1R1). Exerts neuroprotective and general cytoprotective effects due to anti-apoptotic, anti-inflammatory, and antioxidant actions. Promotes neuron projection development through the RAPGEF2/Rap1/B-Raf/ERK pathway. In chromaffin cells, induces long-lasting increase of intracellular calcium concentrations and neuroendocrine secretion. Involved in the control of glucose homeostasis, induces insulin secretion by pancreatic beta cells. PACAP exists in two bioactive forms from proteolysis of the same precursor protein, PACAP27 and PACAP38, which differ by eleven amino acid residues in the C-terminus. The sequence is that of Pituitary adenylate cyclase-activating polypeptide (ADCYAP1) from Ovis aries (Sheep).